The following is a 384-amino-acid chain: Cyclin-J (384 aa).

One can recognise a Cyclin N-terminal domain in the interval 15 to 143; the sequence is DIHQTLRYKE…LLETFEWNLC (129 aa).

This sequence belongs to the cyclin family. Cyclin J subfamily.

The polypeptide is Cyclin-J (ccnj) (Xenopus laevis (African clawed frog)).